The primary structure comprises 321 residues: Prephenate dehydratase (321 aa).

In terms of domain architecture, Prephenate dehydratase spans 3–189 (RIAYLGPEGT…ARTRFVLVGR (187 aa)). An ACT domain is found at 203–280 (SAVLRIDNQP…ADVRYLGSWP (78 aa)).

Homodimer.

The catalysed reaction is prephenate + H(+) = 3-phenylpyruvate + CO2 + H2O. Its pathway is amino-acid biosynthesis; L-phenylalanine biosynthesis; phenylpyruvate from prephenate: step 1/1. This Mycobacterium bovis (strain ATCC BAA-935 / AF2122/97) protein is Prephenate dehydratase (pheA).